The following is a 281-amino-acid chain: MAQHLRKPDWLKIRLGGNEQFTKTKSIVESHCLHTICTSGKCPNMGECWSRGTATFMIGGEICTRSCRFCNTLTGKPLPLDPKEPANVAESIRLMNLKHAVITSVDRDDLPDLGASHWVNTIRTIKEVNPQTTVEVLIPDFQGRLDLVDQVVDAAPEIISHNMETVRRISPQVRSAAKYDVSLSVLRRIAERGVVAKTGIMVGLGETEDEVLELMDDVLQAGVSVLTIGQYLQPSRKNIPVSEYVTPERFEYYRQQAVNKGFKKVESAPLVRSSYHAEKHI.

[4Fe-4S] cluster is bound by residues C37, C42, C48, C63, C67, C70, and S274. The 215-residue stretch at 49-263 (WSRGTATFMI…RQQAVNKGFK (215 aa)) folds into the Radical SAM core domain.

It belongs to the radical SAM superfamily. Lipoyl synthase family. The cofactor is [4Fe-4S] cluster.

It localises to the cytoplasm. It catalyses the reaction [[Fe-S] cluster scaffold protein carrying a second [4Fe-4S](2+) cluster] + N(6)-octanoyl-L-lysyl-[protein] + 2 oxidized [2Fe-2S]-[ferredoxin] + 2 S-adenosyl-L-methionine + 4 H(+) = [[Fe-S] cluster scaffold protein] + N(6)-[(R)-dihydrolipoyl]-L-lysyl-[protein] + 4 Fe(3+) + 2 hydrogen sulfide + 2 5'-deoxyadenosine + 2 L-methionine + 2 reduced [2Fe-2S]-[ferredoxin]. The protein operates within protein modification; protein lipoylation via endogenous pathway; protein N(6)-(lipoyl)lysine from octanoyl-[acyl-carrier-protein]: step 2/2. Catalyzes the radical-mediated insertion of two sulfur atoms into the C-6 and C-8 positions of the octanoyl moiety bound to the lipoyl domains of lipoate-dependent enzymes, thereby converting the octanoylated domains into lipoylated derivatives. This chain is Lipoyl synthase, found in Parabacteroides distasonis (strain ATCC 8503 / DSM 20701 / CIP 104284 / JCM 5825 / NCTC 11152).